The chain runs to 57 residues: MAKSKGNREKIKLVSSAKTGHFYTTEKNKRNMPEKMEIKKFDPVIRQHVMYKEAKIK.

It belongs to the bacterial ribosomal protein bL33 family.

The polypeptide is Large ribosomal subunit protein bL33 (Shewanella denitrificans (strain OS217 / ATCC BAA-1090 / DSM 15013)).